Consider the following 413-residue polypeptide: Alpha-1-antitrypsin 1-1 (413 aa).

The N-terminal stretch at 1-24 (MTPSISWGLLLLAGLCCLVPSFLA) is a signal peptide. N-linked (GlcNAc...) asparagine glycans are attached at residues Asn64, Asn101, and Asn265. The interval 368–387 (AVTVLQMVPMSMPPILRFDH) is RCL.

Belongs to the serpin family.

It is found in the secreted. Functionally, inhibitor of serine proteases. Its primary target is elastase, but it also has a moderate affinity for plasmin and thrombin. The sequence is that of Alpha-1-antitrypsin 1-1 (Serpina1a) from Mus musculus (Mouse).